The chain runs to 320 residues: Malate dehydrogenase (320 aa).

Residues 10 to 15 and D34 contribute to the NAD(+) site; that span reads GAGQIG. Residues R83 and R89 each coordinate substrate. NAD(+)-binding positions include N96 and 119–121; that span reads ITN. The substrate site is built by N121 and R152. H176 serves as the catalytic Proton acceptor.

This sequence belongs to the LDH/MDH superfamily. MDH type 3 family.

It carries out the reaction (S)-malate + NAD(+) = oxaloacetate + NADH + H(+). Functionally, catalyzes the reversible oxidation of malate to oxaloacetate. This Methylobacterium radiotolerans (strain ATCC 27329 / DSM 1819 / JCM 2831 / NBRC 15690 / NCIMB 10815 / 0-1) protein is Malate dehydrogenase.